The primary structure comprises 288 residues: Phenazine biosynthesis-like domain-containing protein 1 (288 aa).

E46 is a catalytic residue.

Belongs to the PhzF family.

The sequence is that of Phenazine biosynthesis-like domain-containing protein 1 (Pbld1) from Mus musculus (Mouse).